Consider the following 277-residue polypeptide: Large ribosomal subunit protein uL2c (277 aa).

Disordered stretches follow at residues isoleucine 24–glycine 57 and asparagine 226–serine 266.

Belongs to the universal ribosomal protein uL2 family. In terms of assembly, part of the 50S ribosomal subunit.

It localises to the plastid. The protein localises to the chloroplast. The sequence is that of Large ribosomal subunit protein uL2c (rpl2) from Zygnema circumcarinatum (Green alga).